Consider the following 166-residue polypeptide: Regulator of ribonuclease activity A (166 aa).

This sequence belongs to the RraA family. Homotrimer. Binds to both RNA-binding sites in the C-terminal region of Rne and to RhlB.

It localises to the cytoplasm. In terms of biological role, globally modulates RNA abundance by binding to RNase E (Rne) and regulating its endonucleolytic activity. Can modulate Rne action in a substrate-dependent manner by altering the composition of the degradosome. Modulates RNA-binding and helicase activities of the degradosome. The protein is Regulator of ribonuclease activity A of Pasteurella multocida (strain Pm70).